Consider the following 284-residue polypeptide: 2-dehydro-3-deoxyphosphooctonate aldolase (284 aa).

Belongs to the KdsA family.

It localises to the cytoplasm. It catalyses the reaction D-arabinose 5-phosphate + phosphoenolpyruvate + H2O = 3-deoxy-alpha-D-manno-2-octulosonate-8-phosphate + phosphate. It participates in carbohydrate biosynthesis; 3-deoxy-D-manno-octulosonate biosynthesis; 3-deoxy-D-manno-octulosonate from D-ribulose 5-phosphate: step 2/3. It functions in the pathway bacterial outer membrane biogenesis; lipopolysaccharide biosynthesis. In Histophilus somni (strain 2336) (Haemophilus somnus), this protein is 2-dehydro-3-deoxyphosphooctonate aldolase.